An 841-amino-acid chain; its full sequence is Translation initiation factor IF-2 (841 aa).

The 168-residue stretch at 341–508 folds into the tr-type G domain; the sequence is NRAPVVTIMG…AILLQAEILE (168 aa). Positions 350-357 are G1; sequence GHVDHGKT. Residue 350–357 coordinates GTP; sequence GHVDHGKT. Residues 375 to 379 form a G2 region; it reads GITQC. The interval 396–399 is G3; sequence DTPG. Residues 396 to 400 and 450 to 453 each bind GTP; these read DTPGH and NKID. Residues 450-453 are G4; sequence NKID. A G5 region spans residues 486–488; sequence SAK.

Belongs to the TRAFAC class translation factor GTPase superfamily. Classic translation factor GTPase family. IF-2 subfamily.

Its subcellular location is the cytoplasm. One of the essential components for the initiation of protein synthesis. Protects formylmethionyl-tRNA from spontaneous hydrolysis and promotes its binding to the 30S ribosomal subunits. Also involved in the hydrolysis of GTP during the formation of the 70S ribosomal complex. This is Translation initiation factor IF-2 from Wigglesworthia glossinidia brevipalpis.